The chain runs to 546 residues: Tryptophan biosynthesis protein TrpCD (546 aa).

Residues 1–226 form an indole-3-glycerol phosphate synthase region; that stretch reads MMDFGFVDSL…FVQTVCGGEK (226 aa). Positions 227–546 are anthranilate phosphoribosyltransferase; that stretch reads MIEDVLRGLD…EEIACKSTSM (320 aa). 5-phospho-alpha-D-ribose 1-diphosphate is bound by residues Gly-295, 298–299, Ser-303, 305–308, 322–330, and Ser-334; these read GD, NVST, and KHGNRAVSS. Gly-295 contributes to the anthranilate binding site. Ser-307 is a Mg(2+) binding site. Asn-325 contributes to the anthranilate binding site. Arg-380 is a binding site for anthranilate. Mg(2+) is bound by residues Asp-437 and Glu-438.

It in the N-terminal section; belongs to the TrpC family. The protein in the C-terminal section; belongs to the anthranilate phosphoribosyltransferase family. Mg(2+) serves as cofactor.

It carries out the reaction 1-(2-carboxyphenylamino)-1-deoxy-D-ribulose 5-phosphate + H(+) = (1S,2R)-1-C-(indol-3-yl)glycerol 3-phosphate + CO2 + H2O. The enzyme catalyses N-(5-phospho-beta-D-ribosyl)anthranilate + diphosphate = 5-phospho-alpha-D-ribose 1-diphosphate + anthranilate. Its pathway is amino-acid biosynthesis; L-tryptophan biosynthesis; L-tryptophan from chorismate: step 2/5. It participates in amino-acid biosynthesis; L-tryptophan biosynthesis; L-tryptophan from chorismate: step 4/5. In terms of biological role, bifunctional enzyme that catalyzes the second and fourth steps of tryptophan biosynthetic pathway. The second step is catalyzed by the anthranilate phosphoribosyltransferase, coded by the TrpD domain and the fourth step is catalyzed by indole-3-glycerol phosphate synthase, coded by the TrpC domain. This chain is Tryptophan biosynthesis protein TrpCD (trpCD), found in Archaeoglobus fulgidus (strain ATCC 49558 / DSM 4304 / JCM 9628 / NBRC 100126 / VC-16).